Reading from the N-terminus, the 403-residue chain is Eukaryotic initiation factor 4A (403 aa).

Residues 1–20 (MDDRNEIPQDGPASMEPEGV) are disordered. Residues 30–58 (DNFDDMNLREELLRGIYGYGFEKPSAIQQ) carry the Q motif motif. The Helicase ATP-binding domain occupies 61 to 231 (IIPCVRGRDV…RCFMRDPVSI (171 aa)). 74–81 (AQSGTGKT) contacts ATP. A DEAD box motif is present at residues 179–182 (DEAD). Residues 242–403 (GIKQFYVNVK…EMPANIADLI (162 aa)) form the Helicase C-terminal domain.

Belongs to the DEAD box helicase family. eIF4A subfamily. EIF4F is a multi-subunit complex, the composition of which varies with external and internal environmental conditions. It is composed of at least eIF4A, eIF4E1 and eIF4G1. Interacts with tud and vas. Interacts (via multiple contacts) with bam; the interaction is direct.

The protein localises to the cytoplasm. It is found in the cytoplasmic ribonucleoprotein granule. It carries out the reaction ATP + H2O = ADP + phosphate + H(+). In terms of biological role, ATP-dependent RNA helicase which is a subunit of the eIF4F complex involved in cap recognition and is required for mRNA binding to ribosome. In the current model of translation initiation, eIF4A unwinds RNA secondary structures in the 5'-UTR of mRNAs which is necessary to allow efficient binding of the small ribosomal subunit, and subsequent scanning for the initiator codon. As a result, promotes cell proliferation and growth. Binds and antagonises the bam-bgcn complex; probably prevents bam mediated translational repression of shg/E-cadherin. Involved in germ cell formation. Involved in germline stem cell maintenance and proliferation; prevents differentiation. In Drosophila melanogaster (Fruit fly), this protein is Eukaryotic initiation factor 4A.